A 193-amino-acid chain; its full sequence is ATP-dependent Clp protease proteolytic subunit (193 aa).

The active-site Nucleophile is Ser-98. His-123 is an active-site residue.

The protein belongs to the peptidase S14 family. In terms of assembly, fourteen ClpP subunits assemble into 2 heptameric rings which stack back to back to give a disk-like structure with a central cavity, resembling the structure of eukaryotic proteasomes.

It localises to the cytoplasm. It catalyses the reaction Hydrolysis of proteins to small peptides in the presence of ATP and magnesium. alpha-casein is the usual test substrate. In the absence of ATP, only oligopeptides shorter than five residues are hydrolyzed (such as succinyl-Leu-Tyr-|-NHMec, and Leu-Tyr-Leu-|-Tyr-Trp, in which cleavage of the -Tyr-|-Leu- and -Tyr-|-Trp bonds also occurs).. In terms of biological role, cleaves peptides in various proteins in a process that requires ATP hydrolysis. Has a chymotrypsin-like activity. Plays a major role in the degradation of misfolded proteins. The chain is ATP-dependent Clp protease proteolytic subunit from Clostridium acetobutylicum (strain ATCC 824 / DSM 792 / JCM 1419 / IAM 19013 / LMG 5710 / NBRC 13948 / NRRL B-527 / VKM B-1787 / 2291 / W).